The following is a 252-amino-acid chain: MTELKKTFADQKRKTVETAEFTEDGRYKRKIRSFVLRTGRLSEYQRQMMNDNWSNYGLDYQTEPFDFPAIYGNHNPVILEIGFGMGKSLVEMAQQNPDKNYLGIEVHTPGVGACLAYALEKGIKNLRVICHDATEILRDCIADRSLGGLQLFFPDPWHKAKHHKRRIVQPQFVKTVTQKLTSGGFIHFATDWQNYAEHMLNVLQSVQSAVGIRNISETGDFIPRPDFRPLTKFEQRGQKLGHGIWDLYFIKN.

The S-adenosyl-L-methionine site is built by E80, E105, D132, and D155. The active site involves D155. Residues K159, D191, and 231–234 (TKFE) each bind substrate.

The protein belongs to the class I-like SAM-binding methyltransferase superfamily. TrmB family.

The catalysed reaction is guanosine(46) in tRNA + S-adenosyl-L-methionine = N(7)-methylguanosine(46) in tRNA + S-adenosyl-L-homocysteine. Its pathway is tRNA modification; N(7)-methylguanine-tRNA biosynthesis. Catalyzes the formation of N(7)-methylguanine at position 46 (m7G46) in tRNA. This is tRNA (guanine-N(7)-)-methyltransferase from Actinobacillus succinogenes (strain ATCC 55618 / DSM 22257 / CCUG 43843 / 130Z).